Consider the following 368-residue polypeptide: Proton-coupled zinc antiporter SLC30A8 (368 aa).

Topologically, residues methionine 1–alanine 78 are cytoplasmic. Zn(2+) is bound by residues histidine 51, cysteine 52, and histidine 53. An HCH Motif; seals regulatory zinc-binding pocket motif is present at residues histidine 51–histidine 53. The chain crosses the membrane as a helical span at residues isoleucine 79–valine 99. The Lumenal, vesicle segment spans residues leucine 100 to aspartate 102. The helical transmembrane segment at alanine 103–serine 123 threads the bilayer. Zn(2+) is bound by residues histidine 105 and aspartate 109. The Cytoplasmic portion of the chain corresponds to serine 124–glutamate 139. A helical transmembrane segment spans residues isoleucine 140–leucine 160. Residues alanine 161–alanine 174 are Lumenal, vesicle-facing. Residues glycine 175 to leucine 195 traverse the membrane as a helical segment. The Cytoplasmic segment spans residues histidine 196–alanine 216. A helical transmembrane segment spans residues phenylalanine 217–isoleucine 237. Histidine 219 and aspartate 223 together coordinate Zn(2+). The Lumenal, vesicle portion of the chain corresponds to tyrosine 238–methionine 245. The helical transmembrane segment at alanine 246–leucine 266 threads the bilayer. At lysine 267–aspartate 368 the chain is on the cytoplasmic side. 6 residues coordinate Zn(2+): histidine 300, histidine 317, histidine 344, glutamate 351, cysteine 360, and cysteine 363.

It belongs to the cation diffusion facilitator (CDF) transporter (TC 2.A.4) family. SLC30A subfamily. In terms of assembly, homodimer. As to expression, expressed in endocrine pancreatic islet alpha and beta cells. May be more abundant in beta cells than in alpha cells. Expressed in cubical epithelium lining thyroid follicles (at protein level). In the adrenal gland, detected in the cortex, but not in the medulla (at protein level).

It localises to the cytoplasmic vesicle. The protein resides in the secretory vesicle membrane. Its subcellular location is the cell membrane. The catalysed reaction is Zn(2+)(in) + 2 H(+)(out) = Zn(2+)(out) + 2 H(+)(in). In terms of biological role, proton-coupled zinc ion antiporter mediating the entry of zinc into the lumen of pancreatic beta cell secretory granules, thereby regulating insulin secretion. The sequence is that of Proton-coupled zinc antiporter SLC30A8 from Rattus norvegicus (Rat).